The primary structure comprises 435 residues: uncharacterized protein (435 aa).

3 WD repeats span residues 105-149 (DLEY…GIDS), 164-204 (HNNA…SKTQ), and 207-247 (AHDK…HSTI). The residue at position 266 (Ser-266) is a Phosphoserine. A WD 4 repeat occupies 313–353 (GHKGDVNAVKWMPGSKSKLATCGDDCVVSLWDLDQPVNPSP). A disordered region spans residues 352-371 (SPAPTLSVSGTTPGMTGSTS). Residues 358 to 371 (SVSGTTPGMTGSTS) show a composition bias toward low complexity. Phosphoserine is present on Ser-388.

It is found in the cytoplasm. The protein resides in the golgi apparatus. This is an uncharacterized protein from Schizosaccharomyces pombe (strain 972 / ATCC 24843) (Fission yeast).